We begin with the raw amino-acid sequence, 25 residues long: Ocellatin-K1 (25 aa).

Position 25 is an isoleucine amide (Ile25).

Expressed by the skin glands.

It localises to the secreted. In terms of biological role, has hemolytic and antibacterial activity. The chain is Ocellatin-K1 from Leptodactylus knudseni (Knudsen's thin-toed frog).